The following is a 539-amino-acid chain: GMP synthase [glutamine-hydrolyzing] (539 aa).

A Glutamine amidotransferase type-1 domain is found at 4-202; it reads KILILDFGSQ…VLGIAGCKPD (199 aa). The active-site Nucleophile is Cys81. Catalysis depends on residues His176 and Glu178. The region spanning 203 to 395 is the GMPS ATP-PPase domain; it reads WVMRDHIEEA…LGLPPEMVYR (193 aa). 230–236 contacts ATP; that stretch reads SGGVDSS.

Homodimer.

The enzyme catalyses XMP + L-glutamine + ATP + H2O = GMP + L-glutamate + AMP + diphosphate + 2 H(+). The protein operates within purine metabolism; GMP biosynthesis; GMP from XMP (L-Gln route): step 1/1. In terms of biological role, catalyzes the synthesis of GMP from XMP. The protein is GMP synthase [glutamine-hydrolyzing] of Cupriavidus necator (strain ATCC 17699 / DSM 428 / KCTC 22496 / NCIMB 10442 / H16 / Stanier 337) (Ralstonia eutropha).